The chain runs to 177 residues: Early nodulin-like protein 15 (177 aa).

An N-terminal signal peptide occupies residues 1 to 24 (MASSSLLVTIFLCISVFFFSSVNA). The region spanning 25 to 129 (NEVTVGGKSG…GQKLRLVVIT (105 aa)) is the Phytocyanin domain. The cysteines at positions 83 and 117 are disulfide-linked. Asn84 carries N-linked (GlcNAc...) asparagine glycosylation. The GPI-anchor amidated serine moiety is linked to residue Ser153. A propeptide spans 154–177 (GAAKLAGGFSVVFGLVLGLWAFFF) (removed in mature form).

Belongs to the early nodulin-like (ENODL) family. In terms of tissue distribution, mostly expressed in seedlings, siliques and flowers, and, to a lower extent, in roots, stems and seeds, but barely in leaves.

The protein resides in the cell membrane. Functionally, may act as a carbohydrate transporter. Required, together with ENODL11, ENODL12, ENODL13, ENODL14 and ENODL15, for male-female communication and pollen tube reception and burst at the synergid cell surface of the female gametophyte. This chain is Early nodulin-like protein 15, found in Arabidopsis thaliana (Mouse-ear cress).